The chain runs to 238 residues: Lipoprotein-releasing system ATP-binding protein LolD (238 aa).

Residues leucine 6–alanine 238 enclose the ABC transporter domain. Glycine 42–serine 49 contacts ATP.

It belongs to the ABC transporter superfamily. Lipoprotein translocase (TC 3.A.1.125) family. As to quaternary structure, the complex is composed of two ATP-binding proteins (LolD) and two transmembrane proteins (LolC and LolE).

Its subcellular location is the cell inner membrane. Its function is as follows. Part of the ABC transporter complex LolCDE involved in the translocation of mature outer membrane-directed lipoproteins, from the inner membrane to the periplasmic chaperone, LolA. Responsible for the formation of the LolA-lipoprotein complex in an ATP-dependent manner. This chain is Lipoprotein-releasing system ATP-binding protein LolD, found in Aliivibrio fischeri (strain ATCC 700601 / ES114) (Vibrio fischeri).